A 65-amino-acid chain; its full sequence is Conotoxin Cal1.3 (65 aa).

Residues 1–18 form the signal peptide; the sequence is MRCLPVFIILLLLASTAA. A propeptide spanning residues 19-49 is cleaved from the precursor; sequence VDVAGSKLKRRLERKPYQGSQAYVKKTAFGL. Disulfide bonds link Cys52–Cys62 and Cys53–Cys59. At Pro61 the chain carries 4-hydroxyproline. Cys62 bears the Cysteine amide mark.

It belongs to the conotoxin T superfamily. Expressed by the venom duct.

It is found in the secreted. Functionally, probable neurotoxin with unknown target. Possibly targets ion channels. The protein is Conotoxin Cal1.3 of Californiconus californicus (California cone).